The chain runs to 470 residues: Retinoic acid receptor RXR-gamma (470 aa).

The interval 1 to 145 (MHLATETAPS…NSPGALTKHI (145 aa)) is modulating. NR C4-type zinc fingers lie at residues 146-166 (CAIC…CEGC) and 182-206 (CRDS…YQKC). The nuclear receptor DNA-binding region spans 146–211 (CAICGDRSSG…RYQKCLAMGM (66 aa)). The interval 212-235 (KREAVQEERQRSREKSDTEAESTS) is hinge. A compositionally biased stretch (basic and acidic residues) spans 217-229 (QEERQRSREKSDT). A disordered region spans residues 217–242 (QEERQRSREKSDTEAESTSSTSEEMP). In terms of domain architecture, NR LBD spans 238–466 (SEEMPVERIL…TFLMEMLETP (229 aa)).

Belongs to the nuclear hormone receptor family. NR2 subfamily. In terms of assembly, homodimer. Heterodimer; with a rar molecule. Binds DNA preferentially as a rar/rxr heterodimer.

The protein localises to the nucleus. Receptor for retinoic acid. Retinoic acid receptors bind as heterodimers to their target response elements in response to their ligands, all-trans or 9-cis retinoic acid, and regulate gene expression in various biological processes. The rar/rxr heterodimers bind to the retinoic acid response elements (RARE) composed of tandem 5'-AGGTCA-3' sites known as DR1-DR5. The high affinity ligand for rxrs is 9-cis retinoic acid. This chain is Retinoic acid receptor RXR-gamma (rxrg), found in Xenopus laevis (African clawed frog).